We begin with the raw amino-acid sequence, 987 residues long: ATP-dependent 6-phosphofructokinase subunit alpha (987 aa).

Positions 1–602 (MPSSSDAINR…DYRYFRDISI (602 aa)) are N-terminal catalytic PFK domain 1. Residues Gly-237, 300-301 (RC), and 330-333 (GDGS) each bind ATP. Asp-331 contributes to the Mg(2+) binding site. Beta-D-fructose 6-phosphate is bound by residues 376–378 (SID), Arg-413, 420–422 (MGR), Glu-477, Arg-504, and 510–513 (HVQR). Asp-378 acts as the Proton acceptor in catalysis. The segment at 603-616 (YDDGSKQLSEDKRL) is interdomain linker. The interval 617–987 (NIAIVHVGAA…KSLLKKQERY (371 aa)) is C-terminal regulatory PFK domain 2. Residues Arg-686, 743–747 (TVSNN), Arg-781, 788–790 (QGG), Glu-848, Arg-874, 880–883 (HVQQ), and Arg-958 each bind beta-D-fructose 2,6-bisphosphate.

The protein belongs to the phosphofructokinase type A (PFKA) family. ATP-dependent PFK group I subfamily. Eukaryotic two domain clade 'E' sub-subfamily. In terms of assembly, heterooctamer of 4 alpha and 4 beta chains. It depends on Mg(2+) as a cofactor.

It localises to the cytoplasm. It catalyses the reaction beta-D-fructose 6-phosphate + ATP = beta-D-fructose 1,6-bisphosphate + ADP + H(+). It participates in carbohydrate degradation; glycolysis; D-glyceraldehyde 3-phosphate and glycerone phosphate from D-glucose: step 3/4. With respect to regulation, allosterically activated by ADP, AMP, or fructose 2,6-bisphosphate, and allosterically inhibited by ATP or citrate. Functionally, catalyzes the phosphorylation of D-fructose 6-phosphate to fructose 1,6-bisphosphate by ATP, the first committing step of glycolysis. This chain is ATP-dependent 6-phosphofructokinase subunit alpha (PFK1), found in Candida albicans (Yeast).